A 682-amino-acid polypeptide reads, in one-letter code: Potassium-transporting ATPase ATP-binding subunit (682 aa).

The next 4 helical transmembrane spans lie at 34-54, 62-82, 219-239, and 254-274; these read PVMF…IAMA, ALFS…ANFA, IALT…TATL, and VLVA…LSAI. Asp307 (4-aspartylphosphate intermediate) is an active-site residue. Residues Asp344, Glu348, 377 to 384, and Lys395 each bind ATP; that span reads FTAQSRMS. 2 residues coordinate Mg(2+): Asp518 and Asp522. 3 helical membrane passes run 588 to 608, 616 to 636, and 662 to 682; these read FAII…LNIM, AILS…PLAL, and LLVP…CGLV.

It belongs to the cation transport ATPase (P-type) (TC 3.A.3) family. Type IA subfamily. As to quaternary structure, the system is composed of three essential subunits: KdpA, KdpB and KdpC.

Its subcellular location is the cell inner membrane. The enzyme catalyses K(+)(out) + ATP + H2O = K(+)(in) + ADP + phosphate + H(+). Its function is as follows. Part of the high-affinity ATP-driven potassium transport (or Kdp) system, which catalyzes the hydrolysis of ATP coupled with the electrogenic transport of potassium into the cytoplasm. This subunit is responsible for energy coupling to the transport system and for the release of the potassium ions to the cytoplasm. This chain is Potassium-transporting ATPase ATP-binding subunit, found in Escherichia coli O81 (strain ED1a).